Reading from the N-terminus, the 305-residue chain is ATP synthase gamma chain (305 aa).

It belongs to the ATPase gamma chain family. F-type ATPases have 2 components, CF(1) - the catalytic core - and CF(0) - the membrane proton channel. CF(1) has five subunits: alpha(3), beta(3), gamma(1), delta(1), epsilon(1). CF(0) has three main subunits: a, b and c.

It localises to the cell membrane. Functionally, produces ATP from ADP in the presence of a proton gradient across the membrane. The gamma chain is believed to be important in regulating ATPase activity and the flow of protons through the CF(0) complex. The polypeptide is ATP synthase gamma chain (Mycobacterium tuberculosis (strain ATCC 25177 / H37Ra)).